The chain runs to 514 residues: Exoglucanase 1 (514 aa).

The signal sequence occupies residues 1–17 (MYRKLAVISAFLATARA). Position 18 is a pyrrolidone carboxylic acid (Gln-18). Positions 18-453 (QSACTLQSET…GSTGNPSGGN (436 aa)) are catalytic. 10 disulfides stabilise this stretch: Cys-21/Cys-89, Cys-36/Cys-42, Cys-67/Cys-88, Cys-78/Cys-84, Cys-155/Cys-414, Cys-189/Cys-227, Cys-193/Cys-226, Cys-247/Cys-273, Cys-255/Cys-260, and Cys-278/Cys-348. Asn-62 carries an N-linked (GlcNAc) asparagine glycan. Residue Glu-229 is the Nucleophile of the active site. Glu-234 functions as the Proton donor/acceptor in the catalytic mechanism. A glycan (N-linked (GlcNAc...) (high mannose) asparagine) is linked at Asn-287. A glycan (N-linked (GlcNAc) asparagine) is linked at Asn-401. Polar residues predominate over residues 401 to 437 (NETSSTPGAVRGSCSTSSGVPAQVESQSPNAKVTFSN). Residues 401 to 481 (NETSSTPGAV…TGSSPGPTQS (81 aa)) are disordered. Positions 454 to 478 (PPGGNPPGTTTTRRPATTTGSSPGP) are linker. The span at 460–479 (PGTTTTRRPATTTGSSPGPT) shows a compositional bias: low complexity. Thr-462 carries O-linked (Man) threonine glycosylation. Thr-463, Thr-464, and Thr-465 each carry an O-linked (Man...) threonine glycan. Thr-470 carries an O-linked (Man) threonine glycan. Thr-471 and Thr-472 each carry an O-linked (Man...) threonine glycan. 2 O-linked (Man) serine glycosylation sites follow: Ser-474 and Ser-475. In terms of domain architecture, CBM1 spans 478 to 514 (PTQSHYGQCGGIGYSGPTVCASGTTCQVLNPYYSQCL). A glycan (O-linked (Man) threonine) is linked at Thr-479. O-linked (Man) serine glycans are attached at residues Ser-481 and Ser-492. 2 disulfide bridges follow: Cys-486–Cys-503 and Cys-497–Cys-513.

Belongs to the glycosyl hydrolase 7 (cellulase C) family. In terms of processing, N-glycosylated. A high mannose glycan is attached to Asn-287 (predominantly Man(8)GlcNAc(2)) and single GlcNAc occupancy is observed at Asn-62 and Asn-401 with some site heterogeneity depending on strains and fermentation conditions. Post-translationally, O-glycosylated. Within the linker domain, all 8 threonines are variably glycosylated with between at least one, and up to three, mannose residues per site. All serines in this domain are at least partially glycosylated with a single mannose residue. O-glycosylation of the cellulase linker provides protection from proteolysis. Linker glycans also contribute to binding affinity of cellobiohydrolases to cellulose.

The protein localises to the secreted. The enzyme catalyses Hydrolysis of (1-&gt;4)-beta-D-glucosidic linkages in cellulose and cellotetraose, releasing cellobiose from the non-reducing ends of the chains.. Functionally, exocellobiohydrolases (CBH) that catalyzes the hydrolysis of 1,4-beta-D-glucosidic bonds in cellulose to release the disaccharide cellobiose. The degradation of cellulose involves an interplay between different cellulolytic enzymes. Hydrolysis starts with endoglucanases (EGs), which cut internal beta-1,4-glucosidic bonds in cellulose to reduce the polymerization degree of the substrate and create new chain ends for exocellobiohydrolases (CBHs). The CBHs release the disaccharide cellobiose from the non-reducing end of the cellulose polymer chain. Finally, beta-1,4-glucosidases hydrolyze the cellobiose and other short cello-oligosaccharides into glucose units. The protein is Exoglucanase 1 (cbh1) of Hypocrea jecorina (strain ATCC 56765 / BCRC 32924 / NRRL 11460 / Rut C-30) (Trichoderma reesei).